Consider the following 320-residue polypeptide: Phospho-N-acetylmuramoyl-pentapeptide-transferase (320 aa).

10 helical membrane passes run 7-27 (ILAI…VIPF), 50-70 (GTPT…SLIF), 77-97 (IGAP…DDFI), 113-133 (LVLQ…HLGS), 148-168 (WAYV…VNLT), 173-193 (GLAS…SIFS), 198-216 (MAIF…LRYN), 221-241 (VVFM…AIAV), 247-267 (VLVL…MLQV), and 297-317 (VVVV…AMIQ).

The protein belongs to the glycosyltransferase 4 family. MraY subfamily. It depends on Mg(2+) as a cofactor.

It is found in the cell membrane. It catalyses the reaction UDP-N-acetyl-alpha-D-muramoyl-L-alanyl-gamma-D-glutamyl-meso-2,6-diaminopimeloyl-D-alanyl-D-alanine + di-trans,octa-cis-undecaprenyl phosphate = di-trans,octa-cis-undecaprenyl diphospho-N-acetyl-alpha-D-muramoyl-L-alanyl-D-glutamyl-meso-2,6-diaminopimeloyl-D-alanyl-D-alanine + UMP. Its pathway is cell wall biogenesis; peptidoglycan biosynthesis. Its function is as follows. Catalyzes the initial step of the lipid cycle reactions in the biosynthesis of the cell wall peptidoglycan: transfers peptidoglycan precursor phospho-MurNAc-pentapeptide from UDP-MurNAc-pentapeptide onto the lipid carrier undecaprenyl phosphate, yielding undecaprenyl-pyrophosphoryl-MurNAc-pentapeptide, known as lipid I. The chain is Phospho-N-acetylmuramoyl-pentapeptide-transferase from Caldicellulosiruptor bescii (strain ATCC BAA-1888 / DSM 6725 / KCTC 15123 / Z-1320) (Anaerocellum thermophilum).